The primary structure comprises 250 residues: Thioesterase FPSE_09186 (250 aa).

Belongs to the AMT4 thioesterase family.

Its pathway is secondary metabolite biosynthesis. Functionally, thioesterase; part of the gene cluster that mediates the biosynthesis of the lipopeptides W493 A and B. W493 A and B consist of six amino acid residues D-allo-thr, L-Ala, D-Ala, L-Gln, D-Tyr, and L-Val/L-Ile linked to a 3-hydroxy-4-methyltetradecanoic acid polyketide chain. The biosynthesis starts with formation of the linear polyketide chain by the highly reducing polyketide synthase PKS40. The gene cluster contains a putative acyl-CoA ligase (FPSE_09184) for formation of a CoA thioester polyketide. The thiol bond could be hydrolyzed by the putative thioesterase (FPSE_09186) and then accepted by the first T domain in module 1 of NRPS32. The second T domain is responsible for accepting a threonine, which is adenylated by the A domain and epimerized to the D-allo-threonine formed by the E domain. The five successive modules incorporate Ala, Ala, Gln, Tyr, and Val/Ile into the final product, which is released by cyclization. The sequence is that of Thioesterase FPSE_09186 from Fusarium pseudograminearum (strain CS3096) (Wheat and barley crown-rot fungus).